The following is an 84-amino-acid chain: Sec-independent protein translocase protein TatA (84 aa).

The chain crosses the membrane as a helical span at residues 4-24 (MSPVHWLILAVVLLVVFGGGG). The disordered stretch occupies residues 46-84 (DDESMTATDATQAPGHISPPNQNPGYSQTTSSETHRNQV). A compositionally biased stretch (polar residues) spans 64–77 (PPNQNPGYSQTTSS).

The protein belongs to the TatA/E family. The Tat system comprises two distinct complexes: a TatABC complex, containing multiple copies of TatA, TatB and TatC subunits, and a separate TatA complex, containing only TatA subunits. Substrates initially bind to the TatABC complex, which probably triggers association of the separate TatA complex to form the active translocon.

Its subcellular location is the cell inner membrane. In terms of biological role, part of the twin-arginine translocation (Tat) system that transports large folded proteins containing a characteristic twin-arginine motif in their signal peptide across membranes. TatA could form the protein-conducting channel of the Tat system. This is Sec-independent protein translocase protein TatA from Gluconobacter oxydans (strain 621H) (Gluconobacter suboxydans).